The primary structure comprises 706 residues: Sodium- and chloride-dependent glycine transporter 1 (706 aa).

The tract at residues methionine 1–serine 26 is disordered. Residues methionine 1–glutamate 108 are Cytoplasmic-facing. A compositionally biased stretch (low complexity) spans arginine 7–alanine 18. Helical transmembrane passes span phenylalanine 109–leucine 129, glycine 136–methionine 156, and valine 188–phenylalanine 208. The Extracellular portion of the chain corresponds to serine 209 to glutamate 285. 9 consecutive transmembrane segments (helical) span residues valine 286–isoleucine 306, valine 315–valine 335, valine 360–isoleucine 380, serine 407–valine 427, leucine 450–leucine 470, valine 506–leucine 526, tyrosine 530–isoleucine 550, leucine 570–phenylalanine 590, and valine 610–phenylalanine 630. The Cytoplasmic portion of the chain corresponds to arginine 631–isoleucine 706. Phosphoserine occurs at positions 673 and 698. The interval serine 695–isoleucine 706 is essential for interaction with EXOC1.

Belongs to the sodium:neurotransmitter symporter (SNF) (TC 2.A.22) family. SLC6A9 subfamily. In terms of assembly, interacts with EXOC1; interaction increases the transporter capacity of SLC6A9 probably by promoting its insertion into the cell membrane. Interacts with EXOC3 and EXOC4. Expressed in the brain, kidney, pancreas, lung, placenta and liver. As to expression, expressed only in the brain.

It is found in the cell membrane. The enzyme catalyses glycine(out) + chloride(out) + 2 Na(+)(out) = glycine(in) + chloride(in) + 2 Na(+)(in). With respect to regulation, inhibited by sarcosine. Functionally, sodium- and chloride-dependent glycine transporter. Essential for regulating glycine concentrations at inhibitory glycinergic synapses. In terms of biological role, sodium- and chloride-dependent glycine transporter. In Homo sapiens (Human), this protein is Sodium- and chloride-dependent glycine transporter 1 (SLC6A9).